A 257-amino-acid polypeptide reads, in one-letter code: Acetylglutamate kinase (257 aa).

Substrate is bound by residues 43-44 (GG), Arg-65, and Asn-157. Residues 180-185 (DVSGIL) and 208-210 (IIT) contribute to the ATP site.

It belongs to the acetylglutamate kinase family. ArgB subfamily. In terms of assembly, homodimer.

The protein localises to the cytoplasm. The enzyme catalyses N-acetyl-L-glutamate + ATP = N-acetyl-L-glutamyl 5-phosphate + ADP. It participates in amino-acid biosynthesis; L-arginine biosynthesis; N(2)-acetyl-L-ornithine from L-glutamate: step 2/4. Its function is as follows. Catalyzes the ATP-dependent phosphorylation of N-acetyl-L-glutamate. This Enterobacter sp. (strain 638) protein is Acetylglutamate kinase.